A 504-amino-acid chain; its full sequence is Cytochrome P450 monooxygenase iccC (504 aa).

Residues leucine 7–serine 26 form a helical membrane-spanning segment. N-linked (GlcNAc...) asparagine glycosylation is found at asparagine 134, asparagine 312, asparagine 365, and asparagine 374. A heme-binding site is contributed by cysteine 452. N-linked (GlcNAc...) asparagine glycosylation is present at asparagine 494.

It belongs to the cytochrome P450 family. Heme serves as cofactor.

It is found in the membrane. The catalysed reaction is (3E,5S)-3-[(2E,4E,8S,10E,12Z)-1-hydroxy-4,8-dimethyltetradeca-2,4,10,12-tetraen-1-ylidene]-5-[(4-hydroxyphenyl)methyl]pyrrolidine-2,4-dione + reduced [NADPH--hemoprotein reductase] + O2 = 3-[(2E,4E,8S,10E,12Z)-4,8-dimethyltetradeca-2,4,10,12-tetraenoyl]-4-hydroxy-5-(4-hydroxyphenyl)-1,2-dihydropyridin-2-one + oxidized [NADPH--hemoprotein reductase] + 2 H2O. It participates in mycotoxin biosynthesis. Its function is as follows. Cytochrome P450 monooxygenase; part of the gene cluster that mediates the biosynthesis of ilicicolin H, a 4-hydroxy-2-pyridonealkaloid that has potent and broad antifungal activities by inhibiting the mitochondrial respiration chain. IccC catalyzes the ring expansion of the tetramate intermediate to the acyclic 2-pyridone intermediate that contains the trans bis-diene chain. The biosynthesis of ilicicolin H starts with formation of the tetramic acid by the hybrid PKS-NRPS synthetase iccA with the partnering trans-enoyl reductase iccB since iccA lacks a designated enoylreductase (ER) domain. The cytochrome P450 monooxygenase iccC then catalyzes the ring expansion of the tetramate to the acyclic 2-pyridone. The pericyclase iccD further converts the acyclic 2-pyridone into 8-epi-ilicicolin H. Finally, the epimerase iccE converts 8-epi-ilicicolin H into ilicicolin H via epimerization. IccA to iccE are sufficient for ilicicolin H biosynthesis and the roles of the remaining enzymes, iccF, iccG and iccH within the pathway have still to be determined. This Talaromyces variabilis (Penicillium variabile) protein is Cytochrome P450 monooxygenase iccC.